A 431-amino-acid polypeptide reads, in one-letter code: Adenylosuccinate synthetase (431 aa).

GTP-binding positions include 12-18 and 40-42; these read GDEGKGK and GHT. The active-site Proton acceptor is the Asp-13. 2 residues coordinate Mg(2+): Asp-13 and Gly-40. IMP-binding positions include 13 to 16, 38 to 41, Thr-128, Arg-142, Gln-223, Thr-238, and Arg-301; these read DEGK and NAGH. The active-site Proton donor is His-41. Residue 297-303 participates in substrate binding; that stretch reads TVTGRPR. Residues Arg-303, 329 to 331, and 411 to 413 each bind GTP; these read SID and SVG.

It belongs to the adenylosuccinate synthetase family. Homodimer. Mg(2+) is required as a cofactor.

The protein resides in the cytoplasm. The enzyme catalyses IMP + L-aspartate + GTP = N(6)-(1,2-dicarboxyethyl)-AMP + GDP + phosphate + 2 H(+). Its pathway is purine metabolism; AMP biosynthesis via de novo pathway; AMP from IMP: step 1/2. Its function is as follows. Plays an important role in the de novo pathway of purine nucleotide biosynthesis. Catalyzes the first committed step in the biosynthesis of AMP from IMP. The polypeptide is Adenylosuccinate synthetase (Lacticaseibacillus paracasei (strain ATCC 334 / BCRC 17002 / CCUG 31169 / CIP 107868 / KCTC 3260 / NRRL B-441) (Lactobacillus paracasei)).